The primary structure comprises 104 residues: L-rhamnose mutarotase (104 aa).

Substrate is bound at residue Tyr18. His22 serves as the catalytic Proton donor. Substrate is bound by residues Tyr41 and 76 to 77; that span reads WW.

This sequence belongs to the rhamnose mutarotase family. Homodimer.

It is found in the cytoplasm. It catalyses the reaction alpha-L-rhamnose = beta-L-rhamnose. The protein operates within carbohydrate metabolism; L-rhamnose metabolism. Its function is as follows. Involved in the anomeric conversion of L-rhamnose. The sequence is that of L-rhamnose mutarotase from Salmonella agona (strain SL483).